A 172-amino-acid polypeptide reads, in one-letter code: Large ribosomal subunit protein uL10 (172 aa).

The protein belongs to the universal ribosomal protein uL10 family. As to quaternary structure, part of the ribosomal stalk of the 50S ribosomal subunit. The N-terminus interacts with L11 and the large rRNA to form the base of the stalk. The C-terminus forms an elongated spine to which L12 dimers bind in a sequential fashion forming a multimeric L10(L12)X complex.

In terms of biological role, forms part of the ribosomal stalk, playing a central role in the interaction of the ribosome with GTP-bound translation factors. This chain is Large ribosomal subunit protein uL10, found in Acidothermus cellulolyticus (strain ATCC 43068 / DSM 8971 / 11B).